The following is a 924-amino-acid chain: Isoleucine--tRNA ligase (924 aa).

Positions 57–67 (PYANGDIHMGH) match the 'HIGH' region motif. L-isoleucyl-5'-AMP is bound at residue Glu552. Residues 593–597 (KMSKS) carry the 'KMSKS' region motif. An ATP-binding site is contributed by Lys596. Zn(2+) contacts are provided by Cys891, Cys894, Cys911, and Cys914.

Belongs to the class-I aminoacyl-tRNA synthetase family. IleS type 1 subfamily. Monomer. It depends on Zn(2+) as a cofactor.

The protein resides in the cytoplasm. It catalyses the reaction tRNA(Ile) + L-isoleucine + ATP = L-isoleucyl-tRNA(Ile) + AMP + diphosphate. Its function is as follows. Catalyzes the attachment of isoleucine to tRNA(Ile). As IleRS can inadvertently accommodate and process structurally similar amino acids such as valine, to avoid such errors it has two additional distinct tRNA(Ile)-dependent editing activities. One activity is designated as 'pretransfer' editing and involves the hydrolysis of activated Val-AMP. The other activity is designated 'posttransfer' editing and involves deacylation of mischarged Val-tRNA(Ile). This chain is Isoleucine--tRNA ligase, found in Geobacillus kaustophilus (strain HTA426).